A 127-amino-acid polypeptide reads, in one-letter code: uncharacterized protein (127 aa).

Residues Met-1–Ser-26 form the signal peptide.

This is an uncharacterized protein from Archaeoglobus fulgidus (strain ATCC 49558 / DSM 4304 / JCM 9628 / NBRC 100126 / VC-16).